Reading from the N-terminus, the 179-residue chain is Large ribosomal subunit protein uL5 (179 aa).

Belongs to the universal ribosomal protein uL5 family. Part of the 50S ribosomal subunit; part of the 5S rRNA/L5/L18/L25 subcomplex. Contacts the 5S rRNA and the P site tRNA. Forms a bridge to the 30S subunit in the 70S ribosome.

Its function is as follows. This is one of the proteins that bind and probably mediate the attachment of the 5S RNA into the large ribosomal subunit, where it forms part of the central protuberance. In the 70S ribosome it contacts protein S13 of the 30S subunit (bridge B1b), connecting the 2 subunits; this bridge is implicated in subunit movement. Contacts the P site tRNA; the 5S rRNA and some of its associated proteins might help stabilize positioning of ribosome-bound tRNAs. The protein is Large ribosomal subunit protein uL5 of Staphylococcus carnosus (strain TM300).